A 108-amino-acid polypeptide reads, in one-letter code: UPF0102 protein Sbal_4100 (108 aa).

It belongs to the UPF0102 family.

This is UPF0102 protein Sbal_4100 from Shewanella baltica (strain OS155 / ATCC BAA-1091).